The following is a 146-amino-acid chain: MSDIQLNTLKPAEGSKHAKRRVGRGIGSGLGKTAGRGHKGQKSRSGGFHKVGFEGGQMPLQRRLPKRGFTPLGQHLYAEVRPSELQLMEAEEIDVQALKAAGVVGQSVRYAKVIKSGELSRKVVLRGITATAGARAAIEAAGGSLA.

A disordered region spans residues 1 to 65; it reads MSDIQLNTLK…GQMPLQRRLP (65 aa). The segment covering 24 to 34 has biased composition (gly residues); sequence RGIGSGLGKTA.

It belongs to the universal ribosomal protein uL15 family. As to quaternary structure, part of the 50S ribosomal subunit.

Its function is as follows. Binds to the 23S rRNA. This Bordetella parapertussis (strain 12822 / ATCC BAA-587 / NCTC 13253) protein is Large ribosomal subunit protein uL15.